Here is a 196-residue protein sequence, read N- to C-terminus: uncharacterized protein (196 aa).

One can recognise a Macro domain in the interval 1–183 (MREFHYGVHM…RFLFILSDLG (183 aa)).

Belongs to the MacroD-type family.

This is an uncharacterized protein from Thermoplasma acidophilum (strain ATCC 25905 / DSM 1728 / JCM 9062 / NBRC 15155 / AMRC-C165).